The primary structure comprises 89 residues: Small ribosomal subunit protein uS15 (89 aa).

The protein belongs to the universal ribosomal protein uS15 family. As to quaternary structure, part of the 30S ribosomal subunit. Forms a bridge to the 50S subunit in the 70S ribosome, contacting the 23S rRNA.

In terms of biological role, one of the primary rRNA binding proteins, it binds directly to 16S rRNA where it helps nucleate assembly of the platform of the 30S subunit by binding and bridging several RNA helices of the 16S rRNA. Its function is as follows. Forms an intersubunit bridge (bridge B4) with the 23S rRNA of the 50S subunit in the ribosome. This chain is Small ribosomal subunit protein uS15, found in Streptococcus agalactiae serotype Ia (strain ATCC 27591 / A909 / CDC SS700).